The following is a 156-amino-acid chain: Small ribosomal subunit protein uS7 (156 aa).

It belongs to the universal ribosomal protein uS7 family. As to quaternary structure, part of the 30S ribosomal subunit. Contacts proteins S9 and S11.

One of the primary rRNA binding proteins, it binds directly to 16S rRNA where it nucleates assembly of the head domain of the 30S subunit. Is located at the subunit interface close to the decoding center, probably blocks exit of the E-site tRNA. The polypeptide is Small ribosomal subunit protein uS7 (Campylobacter concisus (strain 13826)).